Consider the following 298-residue polypeptide: uncharacterized protein (298 aa).

An ABC transporter domain is found at 2–229 (LTIDHVTKTF…FGKKNVTIHS (228 aa)). 34-41 (GANGAGKT) contributes to the ATP binding site.

It belongs to the ABC transporter superfamily.

It localises to the cell membrane. This is an uncharacterized protein from Bacillus subtilis (strain 168).